We begin with the raw amino-acid sequence, 638 residues long: Chaperone protein DnaK (638 aa).

Position 198 is a phosphothreonine; by autocatalysis (T198). The segment at 602 to 638 (QAKSQAQGGEEAQAKDAGQSNDDVVDAEFEEVKDDKK) is disordered. Acidic residues predominate over residues 624–638 (DVVDAEFEEVKDDKK).

The protein belongs to the heat shock protein 70 family.

In terms of biological role, acts as a chaperone. In Shewanella denitrificans (strain OS217 / ATCC BAA-1090 / DSM 15013), this protein is Chaperone protein DnaK.